A 380-amino-acid chain; its full sequence is Putative T-box protein 40 (380 aa).

The segment at residues 11 to 192 (MAEEDRWLTQ…KNATFENRLD (182 aa)) is a DNA-binding region (T-box). A disordered region spans residues 188–215 (ENRLDGGNKRKNTNSREEPSSKRSKNET). Basic and acidic residues predominate over residues 189 to 215 (NRLDGGNKRKNTNSREEPSSKRSKNET).

It is found in the nucleus. In Caenorhabditis elegans, this protein is Putative T-box protein 40 (tbx-40).